Consider the following 228-residue polypeptide: MADS-box transcription factor 22 (228 aa).

The region spanning 1 to 61 (MARERREIKR…GKLSHFASSS (61 aa)) is the MADS-box domain. The K-box domain maps to 86–176 (LNLEHSKYAH…RNQVSQISPA (91 aa)). The interval 189–217 (EGQSSESVMTALHSGSSQSQDNDDGSDVS) is disordered.

As to expression, expressed in palea and stamen primordia. Expressed in shoots and coleoptiles.

It is found in the nucleus. Its function is as follows. Probable transcription factor. May be required for spikelet (rice flower) development. Transcription factor that functions to support the MADS55 in its function as negative regulator of brassinosteroid signaling. This is MADS-box transcription factor 22 (MADS22) from Oryza sativa subsp. japonica (Rice).